The following is a 299-amino-acid chain: Tyrosine recombinase XerC (299 aa).

A Core-binding (CB) domain is found at 1–85; sequence MQNELDAYFE…SVRGLYRYLN (85 aa). The 180-residue stretch at 106-285 folds into the Tyr recombinase domain; the sequence is RLPRLLDTDR…DFQHLAKVYD (180 aa). Residues arginine 146, lysine 170, histidine 237, arginine 240, and histidine 263 contribute to the active site. The active-site O-(3'-phospho-DNA)-tyrosine intermediate is tyrosine 272.

Belongs to the 'phage' integrase family. XerC subfamily. As to quaternary structure, forms a cyclic heterotetrameric complex composed of two molecules of XerC and two molecules of XerD.

It is found in the cytoplasm. Its function is as follows. Site-specific tyrosine recombinase, which acts by catalyzing the cutting and rejoining of the recombining DNA molecules. The XerC-XerD complex is essential to convert dimers of the bacterial chromosome into monomers to permit their segregation at cell division. It also contributes to the segregational stability of plasmids. The chain is Tyrosine recombinase XerC from Stutzerimonas stutzeri (strain A1501) (Pseudomonas stutzeri).